Consider the following 281-residue polypeptide: Pantothenate synthetase (281 aa).

30–37 (MGALHAGH) contributes to the ATP binding site. The active-site Proton donor is the His37. Residue Gln64 coordinates (R)-pantoate. Gln64 contributes to the beta-alanine binding site. Position 150–153 (150–153 (GKKD)) interacts with ATP. Gln156 lines the (R)-pantoate pocket. ATP contacts are provided by residues Val179 and 187-190 (YSSR).

The protein belongs to the pantothenate synthetase family. As to quaternary structure, homodimer.

It localises to the cytoplasm. The enzyme catalyses (R)-pantoate + beta-alanine + ATP = (R)-pantothenate + AMP + diphosphate + H(+). It participates in cofactor biosynthesis; (R)-pantothenate biosynthesis; (R)-pantothenate from (R)-pantoate and beta-alanine: step 1/1. In terms of biological role, catalyzes the condensation of pantoate with beta-alanine in an ATP-dependent reaction via a pantoyl-adenylate intermediate. The polypeptide is Pantothenate synthetase (Akkermansia muciniphila (strain ATCC BAA-835 / DSM 22959 / JCM 33894 / BCRC 81048 / CCUG 64013 / CIP 107961 / Muc)).